Consider the following 502-residue polypeptide: Lysine--tRNA ligase (502 aa).

Mg(2+)-binding residues include Glu-398 and Glu-405.

It belongs to the class-II aminoacyl-tRNA synthetase family. In terms of assembly, homodimer. The cofactor is Mg(2+).

Its subcellular location is the cytoplasm. The enzyme catalyses tRNA(Lys) + L-lysine + ATP = L-lysyl-tRNA(Lys) + AMP + diphosphate. The sequence is that of Lysine--tRNA ligase from Thermosipho africanus (strain TCF52B).